A 327-amino-acid polypeptide reads, in one-letter code: rRNA 2'-O-methyltransferase fibrillarin (327 aa).

The interval Met-1–Glu-95 is disordered. Residues Pro-7–Arg-80 show a composition bias toward gly residues. Residues Arg-8, Arg-15, Arg-21, Arg-24, Arg-28, and Arg-31 each carry the asymmetric dimethylarginine modification. Glycyl lysine isopeptide (Lys-Gly) (interchain with G-Cter in SUMO2) cross-links involve residues Lys-90, Lys-108, and Lys-115. Residue Lys-108 is modified to N6-acetyllysine. The residue at position 122 (Ser-122) is a Phosphoserine. Position 127 is an N6-acetyllysine (Lys-127). Residues Ser-130 and Ser-132 each carry the phosphoserine modification. Glycyl lysine isopeptide (Lys-Gly) (interchain with G-Cter in SUMO2) cross-links involve residues Lys-137, Lys-149, and Lys-164. S-adenosyl-L-methionine-binding positions include Thr-178–Thr-179 and Glu-197–Phe-198. 2 positions are modified to N6-acetyllysine: Lys-211 and Lys-212. S-adenosyl-L-methionine contacts are provided by residues Asp-222 to Ala-223 and Asp-242 to Gln-245.

This sequence belongs to the methyltransferase superfamily. Fibrillarin family. In terms of assembly, component of box C/D small nucleolar ribonucleoprotein (snoRNP) particles that contain SNU13, FBL, NOP5 and NOP56, plus a guide RNA. It is associated with the U3, U8, U13, X and Y small nuclear RNAs. Component of several ribosomal and nucleolar protein complexes. Part of the small subunit (SSU) processome, composed of more than 70 proteins and the RNA chaperone small nucleolar RNA (snoRNA) U3. Interacts with PRMT5 and UTP20. Interacts with DDX5 and C1QBP. Interacts with NOL11. Interacts with PIH1D1. Interacts with RRP1B. Interacts with NOLC1. Interacts with SDE2. Interacts with NOP2 and NOP56. By homology to other fibrillarins, some or all of the N-terminal domain arginines are modified to asymmetric dimethylarginine (DMA). In terms of processing, ubiquitinated. Ubiquitination leads to proteasomal degradation. Deubiquitinated by USP36. Post-translationally, acetylated by CREBBP/CBP, preventing methylation of 'Gln-105' of histone H2A (H2AQ104me), without affecting rRNA methylation. Deacetylation by SIRT7 restores methylation of 'Gln-105' of histone H2A (H2AQ104me).

The protein localises to the nucleus. It is found in the nucleolus. It localises to the nucleoplasm. The catalysed reaction is L-glutaminyl-[histone H2A] + S-adenosyl-L-methionine = N(5)-methyl-L-glutaminyl-[histone H2A] + S-adenosyl-L-homocysteine + H(+). It catalyses the reaction a ribonucleotide in rRNA + S-adenosyl-L-methionine = a 2'-O-methylribonucleotide in rRNA + S-adenosyl-L-homocysteine + H(+). It carries out the reaction a ribonucleotide in U6 snRNA + S-adenosyl-L-methionine = a 2'-O-methylribonucleotide in U6 snRNA + S-adenosyl-L-homocysteine + H(+). S-adenosyl-L-methionine-dependent methyltransferase that has the ability to methylate both RNAs and proteins. Involved in pre-rRNA processing by catalyzing the site-specific 2'-hydroxyl methylation of ribose moieties in pre-ribosomal RNA. Site specificity is provided by a guide RNA that base pairs with the substrate. Methylation occurs at a characteristic distance from the sequence involved in base pairing with the guide RNA. Probably catalyzes 2'-O-methylation of U6 snRNAs in box C/D RNP complexes. U6 snRNA 2'-O-methylation is required for mRNA splicing fidelity. Also acts as a protein methyltransferase by mediating methylation of 'Gln-105' of histone H2A (H2AQ104me), a modification that impairs binding of the FACT complex and is specifically present at 35S ribosomal DNA locus. Part of the small subunit (SSU) processome, first precursor of the small eukaryotic ribosomal subunit. During the assembly of the SSU processome in the nucleolus, many ribosome biogenesis factors, an RNA chaperone and ribosomal proteins associate with the nascent pre-rRNA and work in concert to generate RNA folding, modifications, rearrangements and cleavage as well as targeted degradation of pre-ribosomal RNA by the RNA exosome. This chain is rRNA 2'-O-methyltransferase fibrillarin, found in Mus musculus (Mouse).